The following is a 157-amino-acid chain: Snaclec A16 (157 aa).

An N-terminal signal peptide occupies residues Met1–Ala23. Disulfide bonds link Cys27–Cys38, Cys55–Cys149, and Cys124–Cys141. The 117-residue stretch at Tyr34–Met150 folds into the C-type lectin domain.

Belongs to the snaclec family. As to quaternary structure, heterodimer; disulfide-linked. In terms of tissue distribution, expressed by the venom gland.

The protein resides in the secreted. Interferes with one step of hemostasis (modulation of platelet aggregation, or coagulation cascade, for example). In Macrovipera lebetinus (Levantine viper), this protein is Snaclec A16.